The sequence spans 436 residues: Ribulose bisphosphate carboxylase large chain (436 aa).

Lysine 4 is modified (N6,N6,N6-trimethyllysine). The substrate site is built by asparagine 113 and threonine 163. The Proton acceptor role is filled by lysine 165. Lysine 167 is a binding site for substrate. Mg(2+) is bound by residues lysine 191, aspartate 193, and glutamate 194. Lysine 191 carries the post-translational modification N6-carboxylysine. The Proton acceptor role is filled by histidine 284. Arginine 285, histidine 317, and serine 369 together coordinate substrate.

It belongs to the RuBisCO large chain family. Type I subfamily. Heterohexadecamer of 8 large chains and 8 small chains; disulfide-linked. The disulfide link is formed within the large subunit homodimers. The cofactor is Mg(2+). In terms of processing, the disulfide bond which can form in the large chain dimeric partners within the hexadecamer appears to be associated with oxidative stress and protein turnover.

The protein localises to the plastid. It localises to the chloroplast. It catalyses the reaction 2 (2R)-3-phosphoglycerate + 2 H(+) = D-ribulose 1,5-bisphosphate + CO2 + H2O. The enzyme catalyses D-ribulose 1,5-bisphosphate + O2 = 2-phosphoglycolate + (2R)-3-phosphoglycerate + 2 H(+). In terms of biological role, ruBisCO catalyzes two reactions: the carboxylation of D-ribulose 1,5-bisphosphate, the primary event in carbon dioxide fixation, as well as the oxidative fragmentation of the pentose substrate in the photorespiration process. Both reactions occur simultaneously and in competition at the same active site. This Sanguinaria canadensis (Bloodroot) protein is Ribulose bisphosphate carboxylase large chain.